We begin with the raw amino-acid sequence, 449 residues long: NADP-specific glutamate dehydrogenase (449 aa).

Residues K92, Q113, and K116 each contribute to the substrate site. The active-site Proton donor is K128. Residue G167 coordinates substrate. 2 residues coordinate NADP(+): T211 and N242. S380 lines the substrate pocket.

This sequence belongs to the Glu/Leu/Phe/Val dehydrogenases family. Homohexamer.

The catalysed reaction is L-glutamate + NADP(+) + H2O = 2-oxoglutarate + NH4(+) + NADPH + H(+). Catalyzes the reversible oxidative deamination of glutamate to alpha-ketoglutarate and ammonia. The protein is NADP-specific glutamate dehydrogenase (gdhA) of Haemophilus influenzae (strain ATCC 51907 / DSM 11121 / KW20 / Rd).